Consider the following 68-residue polypeptide: ATP synthase protein 8 (68 aa).

Residues threonine 8–threonine 24 form a helical membrane-spanning segment. Lysine 54 is modified (N6-acetyllysine; alternate). The residue at position 54 (lysine 54) is an N6-succinyllysine; alternate. The residue at position 57 (lysine 57) is an N6-acetyllysine.

Belongs to the ATPase protein 8 family. As to quaternary structure, F-type ATPases have 2 components, CF(1) - the catalytic core - and CF(0) - the membrane proton channel. Component of an ATP synthase complex composed of ATP5PB, ATP5MC1, ATP5F1E, ATP5PD, ATP5ME, ATP5PF, ATP5MF, MT-ATP6, MT-ATP8, ATP5F1A, ATP5F1B, ATP5F1D, ATP5F1C, ATP5PO, ATP5MG, ATP5MK and ATP5MJ. Interacts with PRICKLE3.

The protein resides in the mitochondrion membrane. Functionally, mitochondrial membrane ATP synthase (F(1)F(0) ATP synthase or Complex V) produces ATP from ADP in the presence of a proton gradient across the membrane which is generated by electron transport complexes of the respiratory chain. F-type ATPases consist of two structural domains, F(1) - containing the extramembraneous catalytic core and F(0) - containing the membrane proton channel, linked together by a central stalk and a peripheral stalk. During catalysis, ATP synthesis in the catalytic domain of F(1) is coupled via a rotary mechanism of the central stalk subunits to proton translocation. Part of the complex F(0) domain. Minor subunit located with subunit a in the membrane. The sequence is that of ATP synthase protein 8 (MT-ATP8) from Pongo pygmaeus (Bornean orangutan).